The chain runs to 336 residues: Atypical chemokine receptor 1 (336 aa).

Over 1-63 (MGNCLHQAEL…CNLLDDSSLP (63 aa)) the chain is Extracellular. 3 N-linked (GlcNAc...) asparagine glycosylation sites follow: Asn16, Asn27, and Asn33. 2 cysteine pairs are disulfide-bonded: Cys51–Cys276 and Cys129–Cys195. A helical transmembrane segment spans residues 64–84 (FFILASVLGILASSTVLFLLF). Residues 85–95 (RPLFRWQLCPG) are Cytoplasmic-facing. A helical membrane pass occupies residues 96-116 (WPVLAQLAVGSTLFSIVVPIL). Residues 117–129 (APGLGNTRSSAPC) are Extracellular-facing. Residues 130–153 (SLGYCVWYGSAFAQALLLGCHASL) form a helical membrane-spanning segment. Over 154-166 (GPKLGAGQVPGLT) the chain is Cytoplasmic. Residues 167–187 (LGLSVGLWGAAALLTLPITLA) traverse the membrane as a helical segment. The Extracellular portion of the chain corresponds to 188–207 (SDASDGLCTPIYSTELKALQ). Residues 208 to 228 (ATHTVACFAIFVLLPLGLFGA) form a helical membrane-spanning segment. At 229-244 (KGLKKVLGMGPGPWMN) the chain is on the cytoplasmic side. Residues 245 to 265 (ILWVWFIFWWPHGVVLGLDFL) form a helical membrane-spanning segment. The Extracellular segment spans residues 266–287 (VRSKLLLLPTCLAQQVLDLLLN). The helical transmembrane segment at 288-308 (LAEALAIVHCVATPLLLALFC) threads the bilayer. The Cytoplasmic segment spans residues 309 to 336 (HQATRTLVPSLPLPERWSSPVDTLGSKS).

Belongs to the G-protein coupled receptor 1 family. Atypical chemokine receptor subfamily.

The protein resides in the early endosome. It localises to the recycling endosome. Its subcellular location is the membrane. Functionally, atypical chemokine receptor that controls chemokine levels and localization via high-affinity chemokine binding that is uncoupled from classic ligand-driven signal transduction cascades, resulting instead in chemokine sequestration, degradation, or transcytosis. Also known as interceptor (internalizing receptor) or chemokine-scavenging receptor or chemokine decoy receptor. Has a promiscuous chemokine-binding profile, interacting with inflammatory chemokines of both the CXC and the CC subfamilies but not with homeostatic chemokines. Acts as a receptor for chemokines including CCL2, CCL5, CCL7, CCL11, CCL13, CCL14, CCL17, CXCL5, CXCL6, IL8/CXCL8, CXCL11, GRO, RANTES, MCP-1 and TARC. May regulate chemokine bioavailability and, consequently, leukocyte recruitment through two distinct mechanisms: when expressed in endothelial cells, it sustains the abluminal to luminal transcytosis of tissue-derived chemokines and their subsequent presentation to circulating leukocytes; when expressed in erythrocytes, serves as blood reservoir of cognate chemokines but also as a chemokine sink, buffering potential surges in plasma chemokine levels. The protein is Atypical chemokine receptor 1 (ACKR1) of Saguinus imperator (Emperor tamarin).